The following is a 490-amino-acid chain: Katanin p60 ATPase-containing subunit A-like 1 (490 aa).

At Met1 the chain carries N-acetylmethionine. Residues 96-182 form a disordered region; that stretch reads PAVWPPPVPA…ASDGEIPKFD (87 aa). Residues 116–127 show a composition bias toward basic and acidic residues; sequence PNREVRPLRKEM. The segment covering 128–139 has biased composition (low complexity); it reads AGVGARGPVGRA. A compositionally biased stretch (basic and acidic residues) spans 143–169; that stretch reads SKSEKPSASRDKDCRARGRDDKGRKNM. The residue at position 174 (Ser174) is a Phosphoserine. 248–255 lines the ATP pocket; it reads GPPGTGKT.

It belongs to the AAA ATPase family. Katanin p60 subunit A1 subfamily. A-like 1 sub-subfamily. In terms of assembly, interacts with KATNB1 and KATNBL1.

Its subcellular location is the cytoplasm. It is found in the cytoskeleton. The protein resides in the spindle pole. The protein localises to the spindle. The catalysed reaction is n ATP + n H2O + a microtubule = n ADP + n phosphate + (n+1) alpha/beta tubulin heterodimers.. In terms of biological role, regulates microtubule dynamics in Sertoli cells, a process that is essential for spermiogenesis and male fertility. Severs microtubules in an ATP-dependent manner, promoting rapid reorganization of cellular microtubule arrays. Has microtubule-severing activity in vitro. The protein is Katanin p60 ATPase-containing subunit A-like 1 of Oryctolagus cuniculus (Rabbit).